A 427-amino-acid chain; its full sequence is Intermediate conductance calcium-activated potassium channel protein 4 (427 aa).

The helical transmembrane segment at 29-49 (ALVLAGTGIGLMVLHAEMLWF) threads the bilayer. Residues 59–79 (FLVKCTISISTFLLLCLIVAF) traverse the membrane as a helical segment. A helical transmembrane segment spans residues 108–128 (IVLELVVCGLHPAPVRGPPCV). Residues 143–163 (GFLGQGEALLSLAMLLRLYLV) traverse the membrane as a helical segment. Residues 207-227 (LLLGLTLGLWLTTAWVLSVAE) form a helical membrane-spanning segment. Positions 241-261 (LWLIPITFLTIGYGDVVPGTM) form an intramembrane region, pore-forming. Residues 265–285 (IVCLCTGVMGVCCTALLVAVV) traverse the membrane as a helical segment. The calmodulin-binding stretch occupies residues 286-347 (ARKLEFNKAE…RRHQRKLLAA (62 aa)). The residue at position 358 (H358) is a Phosphohistidine.

The protein belongs to the potassium channel KCNN family. KCa3.1/KCNN4 subfamily. In terms of assembly, homodimer. Homotetramer. Heterotetramer of potassium channel proteins. Interacts with MTMR6; this interaction leads to selective dephosphorylation of PI(3)P in a lipid microdomain adjacent to KCNN4, resulting in a decrease of intermediate conductance calcium-activated potassium channel activity. Interacts (via the C-tail domain) with CALM1; the calmodulin binding is constitutive, does not require calcium and mediates calcium-dependent gating and four calmodulin molecules bind to one channel tetramer. Phosphorylation at His-358 by NDKB activates the intermediate conductance calcium-activated potassium channel activity, and conversely it's dephosphorylation by PHPT1 inhibits this activity. As to expression, widely expressed in non-excitable tissues.

It is found in the cell membrane. The protein resides in the cell projection. It localises to the ruffle membrane. It catalyses the reaction K(+)(in) = K(+)(out). The channel is inhibited by clotrimazole and charybdotoxin but is insensitive to apamin. Intermediate conductance calcium-activated potassium channel that mediates the voltage-independent transmembrane transfer of potassium across the cell membrane through a constitutive interaction with calmodulin which binds the intracellular calcium allowing its opening. The current is characterized by a voltage-independent activation, an intracellular calcium concentration increase-dependent activation and a single-channel conductance of about 25 picosiemens. Also presents an inwardly rectifying current, thus reducing its already small outward conductance of potassium ions, which is particularly the case when the membrane potential displays positive values, above + 20 mV. Controls calcium influx during vascular contractility by being responsible of membrane hyperpolarization induced by vasoactive factors in proliferative vascular smooth muscle cell types. Following calcium influx, the consecutive activation of KCNN4 channel leads to a hyperpolarization of the cell membrane potential and hence an increase of the electrical driving force for further calcium influx promoting sustained calcium entry in response to stimulation with chemotactic peptides. Required for maximal calcium influx and proliferation during the reactivation of naive T-cells. Plays a role in the late stages of EGF-induced macropinocytosis through activation by PI(3)P. This chain is Intermediate conductance calcium-activated potassium channel protein 4, found in Homo sapiens (Human).